The sequence spans 366 residues: Adenine DNA glycosylase (366 aa).

30-31 (WR) is a binding site for DNA. The Proton donor/acceptor role is filled by Glu43. DNA is bound by residues 48-49 (QT), 86-88 (LGY), Tyr126, and Glu188. The 29-residue stretch at 105–133 (RYGGKVPDDPDEFSRLKGVGPYTVGAVLS) folds into the HhH domain. 4 residues coordinate [4Fe-4S] cluster: Cys198, Cys205, Cys208, and Cys214. Residue Ser308 coordinates DNA.

This sequence belongs to the Nth/MutY family. [4Fe-4S] cluster serves as cofactor.

The enzyme catalyses Hydrolyzes free adenine bases from 7,8-dihydro-8-oxoguanine:adenine mismatched double-stranded DNA, leaving an apurinic site.. Base excision repair (BER) glycosylase that initiates repair of A:oxoG to C:G by removing the inappropriately paired adenine base from the DNA backbone, generating an abasic site product. 8-oxoguanine (oxoG) is a genotoxic DNA lesion resulting from oxidation of guanine; this residue is misread by replicative DNA polymerases, that insert adenine instead of cytosine opposite the oxidized damaged base. Shows a powerful dicrimination of A versus C, since it does not cleave cytosine in oxoG:C pairs. May also be able to remove adenine from A:G mispairs, although this activity may not be physiologically relevant. The chain is Adenine DNA glycosylase from Geobacillus stearothermophilus (Bacillus stearothermophilus).